The primary structure comprises 348 residues: Short-chain dehydrogenase fogG (348 aa).

The NADP(+) site is built by Leu51, Arg75, Asp100, and Asn126. Catalysis depends on proton donor residues Ser180 and Tyr215. Residues Tyr215 and Lys219 each coordinate NADP(+). Catalysis depends on Lys219, which acts as the Lowers pKa of active site Tyr.

It belongs to the short-chain dehydrogenases/reductases (SDR) family.

The protein operates within secondary metabolite biosynthesis. Its function is as follows. Short-chain dehydrogenase; part of the gene cluster that mediates the biosynthesis of flavoglaucin and congeners (including aspergin, dihydroauroglaucin and auroglaucin), prenylated salicylaldehyde derivatives carrying a saturated or an unsaturated C-7 side chain. The PKS fogA releases the carboxylic acid (8E,10E,12E)-3,5,7-trihydroxytetradeca-8,10,12-trienoic acid as its product, as well as derivatives with one and two double bonds. FogA is indeed able to reduce the initial triketide, thus being at least partially responsible for the differently saturated heptyl side chains of flavoglaucin congeners. The oxidoreductases fogB, fogC and fogD modify the nascent polyketide in fogA-bound form and, together, fogA, fogB, fogC and fogD are necessary for the formation of the aromatic core and the cyclized PKS products are released as salicyl alcohols. In particular, fogB is responsible for oxidation of a hydroxyl group or reduction of remaining double bond(s) at the C-7 residue whereas fogD is probably involved in the reductive release of the modified PKS products. The cytochrome P450 monooxygenase fogE is then responsible for the hydroxylation at C-3 of the benzene ring. The fogE products are substrates of the prenyltransferase fogH and the prenylated benzyl alcohols are subsequently oxidized by the fogF to produce the final aryl aldehydes flavoglaucin and congeners. The short-chain dehydrogenase fogG does not seem to be involved in the biosynthesis of the prenylated salicylaldehyde derivatives. The protein is Short-chain dehydrogenase fogG of Aspergillus ruber (strain CBS 135680).